The chain runs to 250 residues: Probable transcriptional regulatory protein SCO1521 (250 aa).

It belongs to the TACO1 family.

The protein resides in the cytoplasm. The chain is Probable transcriptional regulatory protein SCO1521 from Streptomyces coelicolor (strain ATCC BAA-471 / A3(2) / M145).